The primary structure comprises 220 residues: Ras-related protein Rab-11B (220 aa).

18–25 (GDSGVGKS) is a GTP binding site. An Effector region motif is present at residues 40 to 48 (KLSTIGVEF). GTP-binding positions include 66-70 (DTAGQ) and 124-127 (NKSD). Residues Cys219 and Cys220 are each lipidated (S-geranylgeranyl cysteine).

The protein belongs to the small GTPase superfamily. Rab family.

It is found in the cell membrane. The chain is Ras-related protein Rab-11B (rab11B) from Dictyostelium discoideum (Social amoeba).